Here is a 40-residue protein sequence, read N- to C-terminus: Auxin-responsive endogenous peptide 1 (40 aa).

A helical transmembrane segment spans residues leucine 7–histidine 29.

As to expression, expressed in cotyledons, hypocotyls, roots, newly developing leaves and shoot apical meristem. Not detected in flowers, siliques or mature leaves.

It localises to the cytoplasm. Its subcellular location is the nucleus. It is found in the membrane. Functionally, negative regulator of the auxin response. The polypeptide is Auxin-responsive endogenous peptide 1 (Arabidopsis thaliana (Mouse-ear cress)).